A 508-amino-acid polypeptide reads, in one-letter code: Immunoglobulin G-binding protein A (508 aa).

Positions 1–36 are cleaved as a signal peptide; it reads MKKKNIYSIRKLGVGIASVTLGTLLISGGVTPAANA. The YSIRK-G/S signaling motif signature appears at 7–18; that stretch reads YSIRKLGVGIAS. The Immunoglobulin-binding region E repeat unit spans residues 37–92; that stretch reads AQHDEAQQNAFYQVLNMPNLNADQRNGFIQSLKDDPSQSANVLGEAQKLNDSQAPK. Residues 93-153 form an Immunoglobulin-binding region D repeat; it reads ADAQQNNFNK…KKLNESQAPK (61 aa). Residues 154–211 form an Immunoglobulin-binding region A repeat; that stretch reads ADNNFNKEQQNAFYEILNMPNLNEEQRNGFIQSLKDDPSQSANLLSEAKKLNESQAPK. The Immunoglobulin-binding region B repeat unit spans residues 212-269; the sequence is ADNKFNKEQQNAFYEILHLPNLNEEQRNGFIQSLKDDPSQSANLLAEAKKLNDAQAPK. The stretch at 270–327 is one Immunoglobulin-binding region C repeat; it reads ADNKFNKEQQNAFYEILHLPNLTEEQRNGFIQSLKDDPSVSKEILAEAKKLNDAQAPK. Residues 318–412 show a composition bias toward basic and acidic residues; the sequence is KKLNDAQAPK…GNKPGKEDGN (95 aa). Disordered regions lie at residues 318 to 421 and 459 to 479; these read KKLN…KPGD and KKQP…ETGE. 10 tandem repeats follow at residues 333–340, 341–348, 349–356, 357–364, 365–372, 373–380, 381–388, 389–396, 397–404, and 405–412. A 10 X 8 AA approximate tandem repeats region spans residues 333–412; it reads KPGKEDNNKP…GNKPGKEDGN (80 aa). The LysM domain maps to 413 to 457; that stretch reads GVHVVKPGDTVNDIAKANGTTADKIAADNKLADKNMIKPGQELVV. The short motif at 474–478 is the LPXTG sorting signal element; the sequence is LPETG. A Pentaglycyl murein peptidoglycan amidated threonine modification is found at T477. Residues 478-508 constitute a propeptide, removed by sortase; the sequence is GEENPFIGTTVFGGLSLALGAALLAGRRREL.

The protein belongs to the immunoglobulin-binding protein SpA family. Interacts with host TNFRSF1A; this interaction leads to the stimulation of both surface expression and shedding of TNFRSF1A.

It is found in the secreted. It localises to the cell wall. Its function is as follows. Plays a role in the inhibition of the host innate and adaptive immune responses. Possesses five immunoglobulin-binding domains that capture both the fragment crystallizable region (Fc region) and the Fab region (part of Ig that identifies antigen) of immunoglobulins. In turn, Staphylococcus aureus is protected from phagocytic killing via inhibition of Ig Fc region. In addition, the host elicited B-cell response is prevented due to a decrease of antibody-secreting cell proliferation that enter the bone marrow, thereby decreasing long-term antibody production. Inhibits osteogenesis by preventing osteoblast proliferation and expression of alkaline phosphatase, type I collagen, osteopontin and osteocalcin. Acts directly as a pro-inflammatory factor in the lung through its ability to bind and activate tumor necrosis factor alpha receptor 1/TNFRSF1A. The chain is Immunoglobulin G-binding protein A (spa) from Staphylococcus aureus (strain Newman).